The primary structure comprises 858 residues: Bifunctional uridylyltransferase/uridylyl-removing enzyme (858 aa).

Residues methionine 1–alanine 318 form a uridylyltransferase region. The interval isoleucine 319–leucine 674 is uridylyl-removing. In terms of domain architecture, HD spans valine 437–leucine 559. 2 consecutive ACT domains span residues glutamine 675 to valine 756 and arginine 789 to glutamate 858.

It belongs to the GlnD family. Mg(2+) is required as a cofactor.

The catalysed reaction is [protein-PII]-L-tyrosine + UTP = [protein-PII]-uridylyl-L-tyrosine + diphosphate. The enzyme catalyses [protein-PII]-uridylyl-L-tyrosine + H2O = [protein-PII]-L-tyrosine + UMP + H(+). Uridylyltransferase (UTase) activity is inhibited by glutamine, while glutamine activates uridylyl-removing (UR) activity. In terms of biological role, modifies, by uridylylation and deuridylylation, the PII regulatory proteins (GlnB and homologs), in response to the nitrogen status of the cell that GlnD senses through the glutamine level. Under low glutamine levels, catalyzes the conversion of the PII proteins and UTP to PII-UMP and PPi, while under higher glutamine levels, GlnD hydrolyzes PII-UMP to PII and UMP (deuridylylation). Thus, controls uridylylation state and activity of the PII proteins, and plays an important role in the regulation of nitrogen assimilation and metabolism. This is Bifunctional uridylyltransferase/uridylyl-removing enzyme from Bordetella avium (strain 197N).